Consider the following 259-residue polypeptide: uncharacterized protein (259 aa).

A signal peptide (or 26) is located at residues 1–19; the sequence is MKLSVKIAGVLTVAAAAMT. ATP is bound at residue 214-221; that stretch reads GPYELGKT.

This is an uncharacterized protein from Bacillus subtilis (strain 168).